Here is a 117-residue protein sequence, read N- to C-terminus: Protein Rev (117 aa).

Phosphoserine; by host CK2 occurs at positions 5 and 8. Residues 18 to 26 (LIKILYQSN) form a homomultimerization region. The tract at residues 24–49 (QSNPPPNTEGTTRQARRNRRRRWRAR) is disordered. Positions 35-51 (TRQARRNRRRRWRARQR) match the Nuclear localization signal and RNA-binding (RRE) motif. Basic residues predominate over residues 37–49 (QARRNRRRRWRAR). The Nuclear export signal and binding to XPO1 signature appears at 74–85 (LQLPPLERLTLN). A phosphoserine; by host mark is found at S93 and S100. Positions 93 to 105 (SGTQGVGSPQISV) are enriched in polar residues. The disordered stretch occupies residues 93–117 (SGTQGVGSPQISVESPAILGSGTEE).

This sequence belongs to the HIV-1 REV protein family. In terms of assembly, homomultimer; when bound to the RRE. Multimeric assembly is essential for activity and may involve XPO1. Binds to human KPNB1, XPO1, TNPO1, RANBP5 and IPO7. Interacts with the viral Integrase. Interacts with human KHDRBS1. Interacts with human NAP1; this interaction decreases Rev multimerization and stimulates its activity. Interacts with human DEAD-box helicases DDX3 and DDX24; these interactions may serve for viral RNA export to the cytoplasm and packaging, respectively. Interacts with human PSIP1; this interaction may inhibit HIV-1 DNA integration by promoting dissociation of the Integrase-LEDGF/p75 complex. In terms of processing, asymmetrically arginine dimethylated at one site by host PRMT6. Methylation impairs the RNA-binding activity and export of viral RNA from the nucleus to the cytoplasm. Post-translationally, phosphorylated by protein kinase CK2. Presence of, and maybe binding to the N-terminus of the regulatory beta subunit of CK2 is necessary for CK2-mediated Rev's phosphorylation.

The protein localises to the host nucleus. The protein resides in the host nucleolus. Its subcellular location is the host cytoplasm. Escorts unspliced or incompletely spliced viral pre-mRNAs (late transcripts) out of the nucleus of infected cells. These pre-mRNAs carry a recognition sequence called Rev responsive element (RRE) located in the env gene, that is not present in fully spliced viral mRNAs (early transcripts). This function is essential since most viral proteins are translated from unspliced or partially spliced pre-mRNAs which cannot exit the nucleus by the pathway used by fully processed cellular mRNAs. Rev itself is translated from a fully spliced mRNA that readily exits the nucleus. Rev's nuclear localization signal (NLS) binds directly to KPNB1/Importin beta-1 without previous binding to KPNA1/Importin alpha-1. KPNB1 binds to the GDP bound form of RAN (Ran-GDP) and targets Rev to the nucleus. In the nucleus, the conversion from Ran-GDP to Ran-GTP dissociates Rev from KPNB1 and allows Rev's binding to the RRE in viral pre-mRNAs. Rev multimerization on the RRE via cooperative assembly exposes its nuclear export signal (NES) to the surface. Rev can then form a complex with XPO1/CRM1 and Ran-GTP, leading to nuclear export of the complex. Conversion from Ran-GTP to Ran-GDP mediates dissociation of the Rev/RRE/XPO1/RAN complex, so that Rev can return to the nucleus for a subsequent round of export. Beside KPNB1, also seems to interact with TNPO1/Transportin-1, RANBP5/IPO5 and IPO7/RANBP7 for nuclear import. The nucleoporin-like HRB/RIP is an essential cofactor that probably indirectly interacts with Rev to release HIV RNAs from the perinuclear region to the cytoplasm. The sequence is that of Protein Rev from Human immunodeficiency virus type 1 group M subtype A (isolate MAL) (HIV-1).